A 388-amino-acid chain; its full sequence is UDP-galactose transporter senju (388 aa).

Transmembrane regions (helical) follow at residues 13–33, 46–66, 84–104, 113–133, 142–162, 202–222, 236–256, 276–296, 309–329, and 331–351; these read LTFV…IFVT, TVTV…CLYC, VLGL…LAFV, TYYL…QIIF, WISL…FGSF, FSLS…AGVY, IFVQ…VILL, FSVL…SFFL, ALEL…PIYM, and TALA…SPVV.

It belongs to the nucleotide-sugar transporter family.

It is found in the golgi apparatus membrane. Functionally, UDP-galactose transporter involved in the synthesis of galactose-containing glycans. Plays a role in quiescence of the innate immune response, possibly by regulating glycosylation of the Toll pathway ligand spz. In Drosophila melanogaster (Fruit fly), this protein is UDP-galactose transporter senju.